We begin with the raw amino-acid sequence, 181 residues long: Ribonuclease M5 (181 aa).

A Toprim domain is found at 3 to 86 (KEVIVVEGRD…AYISQEEGTK (84 aa)). Residues glutamate 9, aspartate 55, and aspartate 57 each coordinate Mg(2+).

The protein belongs to the ribonuclease M5 family. Requires Mg(2+) as cofactor.

It localises to the cytoplasm. It carries out the reaction Endonucleolytic cleavage of RNA, removing 21 and 42 nucleotides, respectively, from the 5'- and 3'-termini of a 5S-rRNA precursor.. Required for correct processing of both the 5' and 3' ends of 5S rRNA precursor. Cleaves both sides of a double-stranded region yielding mature 5S rRNA in one step. The chain is Ribonuclease M5 from Clostridium botulinum (strain Hall / ATCC 3502 / NCTC 13319 / Type A).